A 230-amino-acid chain; its full sequence is uncharacterized protein (230 aa).

To E.coli HemX N-terminal region.

This is an uncharacterized protein from Haemophilus influenzae (strain ATCC 51907 / DSM 11121 / KW20 / Rd).